Reading from the N-terminus, the 135-residue chain is Peptide methionine sulfoxide reductase MsrB (135 aa).

In terms of domain architecture, MsrB spans 9–131; the sequence is DDYWRSKLTD…NSASIQFEEE (123 aa). Zn(2+)-binding residues include cysteine 48, cysteine 51, cysteine 97, and cysteine 100. Cysteine 120 functions as the Nucleophile in the catalytic mechanism.

It belongs to the MsrB Met sulfoxide reductase family. The cofactor is Zn(2+).

It catalyses the reaction L-methionyl-[protein] + [thioredoxin]-disulfide + H2O = L-methionyl-(R)-S-oxide-[protein] + [thioredoxin]-dithiol. This chain is Peptide methionine sulfoxide reductase MsrB, found in Teredinibacter turnerae (strain ATCC 39867 / T7901).